We begin with the raw amino-acid sequence, 217 residues long: Tegument protein BKRF4 (217 aa).

Residues methionine 1–leucine 217 are disordered. Polar residues predominate over residues tyrosine 32 to isoleucine 42. Residues glutamine 43–aspartate 79 show a composition bias toward acidic residues. The interaction with host histones H3/H4 stretch occupies residues aspartate 63–leucine 64. The tract at residues aspartate 81 to tryptophan 84 is interaction with host H2A/H2B. Over residues serine 89–alanine 102 the composition is skewed to acidic residues. The span at serine 106–arginine 132 shows a compositional bias: low complexity. The span at arginine 136–alanine 145 shows a compositional bias: pro residues. Residues glycine 208 to leucine 217 are compositionally biased toward polar residues.

It belongs to the lymphocryptovirus BKRF4 family. As to quaternary structure, forms a complex with the host H3/H4 dimer and histone chaperone ASF1. Also forms a complex with host H2A/H2B dimer. Interacts (via C-terminus) with BGLF2; this interaction is important for infectious virion production.

Its subcellular location is the virion tegument. It localises to the host nucleus. The protein localises to the host cytoplasm. It is found in the host perinuclear region. Histone-binding protein that binds to histones H2A/H2B, H3/H4 and cellular chromatin to overcome the host DNA damage response triggered by the viral genome ends. Interferes with histone ubiquitination and recruitment of repair proteins. This is Tegument protein BKRF4 from Epstein-Barr virus (strain AG876) (HHV-4).